Here is a 203-residue protein sequence, read N- to C-terminus: Na(+)-translocating NADH-quinone reductase subunit E (203 aa).

6 consecutive transmembrane segments (helical) span residues 12–32 (AVFV…FLAL), 36–56 (MEAA…TVPV), 82–102 (FLGL…LEMV), 115–135 (GVFL…LFMV), 145–165 (LVYG…LAGI), and 181–201 (LGIT…FSGI).

The protein belongs to the NqrDE/RnfAE family. As to quaternary structure, composed of six subunits; NqrA, NqrB, NqrC, NqrD, NqrE and NqrF.

The protein localises to the cell inner membrane. It carries out the reaction a ubiquinone + n Na(+)(in) + NADH + H(+) = a ubiquinol + n Na(+)(out) + NAD(+). In terms of biological role, NQR complex catalyzes the reduction of ubiquinone-1 to ubiquinol by two successive reactions, coupled with the transport of Na(+) ions from the cytoplasm to the periplasm. NqrA to NqrE are probably involved in the second step, the conversion of ubisemiquinone to ubiquinol. The polypeptide is Na(+)-translocating NADH-quinone reductase subunit E (Hahella chejuensis (strain KCTC 2396)).